We begin with the raw amino-acid sequence, 147 residues long: Large ribosomal subunit protein uL22 (147 aa).

Positions 110 to 147 (EEKKTVAKKAPAAKKTTTTKAPAKKTTSTKKATAKKES) are disordered. Residues 117 to 140 (KKAPAAKKTTTTKAPAKKTTSTKK) are compositionally biased toward low complexity.

Belongs to the universal ribosomal protein uL22 family. Part of the 50S ribosomal subunit.

Its function is as follows. This protein binds specifically to 23S rRNA; its binding is stimulated by other ribosomal proteins, e.g. L4, L17, and L20. It is important during the early stages of 50S assembly. It makes multiple contacts with different domains of the 23S rRNA in the assembled 50S subunit and ribosome. The globular domain of the protein is located near the polypeptide exit tunnel on the outside of the subunit, while an extended beta-hairpin is found that lines the wall of the exit tunnel in the center of the 70S ribosome. This chain is Large ribosomal subunit protein uL22, found in Campylobacter jejuni subsp. jejuni serotype O:6 (strain 81116 / NCTC 11828).